We begin with the raw amino-acid sequence, 257 residues long: Type III pantothenate kinase (257 aa).

Asp-6 to Val-13 is a binding site for ATP. Position 107–110 (Gly-107–Arg-110) interacts with substrate. The active-site Proton acceptor is Asp-109. Asp-129 is a binding site for K(+). Residue Thr-132 coordinates ATP. Position 184 (Thr-184) interacts with substrate.

It belongs to the type III pantothenate kinase family. In terms of assembly, homodimer. NH4(+) is required as a cofactor. The cofactor is K(+).

The protein localises to the cytoplasm. It catalyses the reaction (R)-pantothenate + ATP = (R)-4'-phosphopantothenate + ADP + H(+). The protein operates within cofactor biosynthesis; coenzyme A biosynthesis; CoA from (R)-pantothenate: step 1/5. In terms of biological role, catalyzes the phosphorylation of pantothenate (Pan), the first step in CoA biosynthesis. In Cereibacter sphaeroides (strain ATCC 17029 / ATH 2.4.9) (Rhodobacter sphaeroides), this protein is Type III pantothenate kinase.